The chain runs to 583 residues: Aspartate--tRNA ligase (583 aa).

L-aspartate is bound at residue Glu-174. An aspartate region spans residues Gln-198–Lys-201. Residue Arg-220 participates in L-aspartate binding. ATP-binding positions include Arg-220 to Glu-222 and Gln-229. His-443 lines the L-aspartate pocket. Residue Glu-477 coordinates ATP. Residue Arg-484 coordinates L-aspartate. Residue Gly-529–Arg-532 participates in ATP binding.

The protein belongs to the class-II aminoacyl-tRNA synthetase family. Type 1 subfamily. In terms of assembly, homodimer.

It localises to the cytoplasm. It catalyses the reaction tRNA(Asp) + L-aspartate + ATP = L-aspartyl-tRNA(Asp) + AMP + diphosphate. Functionally, catalyzes the attachment of L-aspartate to tRNA(Asp) in a two-step reaction: L-aspartate is first activated by ATP to form Asp-AMP and then transferred to the acceptor end of tRNA(Asp). The polypeptide is Aspartate--tRNA ligase (Streptococcus agalactiae serotype III (strain NEM316)).